Reading from the N-terminus, the 198-residue chain is Ribosome maturation factor RimM (198 aa).

The interval 1–21 (MPPPTASTPDDSADPGPDFAD) is disordered. A PRC barrel domain is found at 122-195 (DDELFADDLV…RIVVRPIDGL (74 aa)).

It belongs to the RimM family. As to quaternary structure, binds ribosomal protein uS19.

Its subcellular location is the cytoplasm. An accessory protein needed during the final step in the assembly of 30S ribosomal subunit, possibly for assembly of the head region. Essential for efficient processing of 16S rRNA. May be needed both before and after RbfA during the maturation of 16S rRNA. It has affinity for free ribosomal 30S subunits but not for 70S ribosomes. The protein is Ribosome maturation factor RimM of Salinibacter ruber (strain DSM 13855 / M31).